A 233-amino-acid polypeptide reads, in one-letter code: Small ribosomal subunit protein uS3 (233 aa).

A KH type-2 domain is found at 39–107 (VRQYLNKELA…PAQINIAEVR (69 aa)).

This sequence belongs to the universal ribosomal protein uS3 family. As to quaternary structure, part of the 30S ribosomal subunit. Forms a tight complex with proteins S10 and S14.

Its function is as follows. Binds the lower part of the 30S subunit head. Binds mRNA in the 70S ribosome, positioning it for translation. This is Small ribosomal subunit protein uS3 from Cronobacter sakazakii (strain ATCC BAA-894) (Enterobacter sakazakii).